The primary structure comprises 247 residues: Adenosylcobinamide-GDP ribazoletransferase (247 aa).

5 helical membrane passes run 34 to 54 (IITF…VFMV), 59 to 79 (CGVP…TGGF), 113 to 133 (GGLA…ELTL), 138 to 158 (ILAS…LLMY), and 194 to 214 (VLLP…AIFI).

This sequence belongs to the CobS family. The cofactor is Mg(2+).

The protein localises to the cell inner membrane. The catalysed reaction is alpha-ribazole + adenosylcob(III)inamide-GDP = adenosylcob(III)alamin + GMP + H(+). The enzyme catalyses alpha-ribazole 5'-phosphate + adenosylcob(III)inamide-GDP = adenosylcob(III)alamin 5'-phosphate + GMP + H(+). It participates in cofactor biosynthesis; adenosylcobalamin biosynthesis; adenosylcobalamin from cob(II)yrinate a,c-diamide: step 7/7. Joins adenosylcobinamide-GDP and alpha-ribazole to generate adenosylcobalamin (Ado-cobalamin). Also synthesizes adenosylcobalamin 5'-phosphate from adenosylcobinamide-GDP and alpha-ribazole 5'-phosphate. The polypeptide is Adenosylcobinamide-GDP ribazoletransferase (Escherichia coli O127:H6 (strain E2348/69 / EPEC)).